The sequence spans 161 residues: Endoribonuclease YbeY (161 aa).

Residues His127, His131, and His137 each coordinate Zn(2+).

This sequence belongs to the endoribonuclease YbeY family. Requires Zn(2+) as cofactor.

Its subcellular location is the cytoplasm. In terms of biological role, single strand-specific metallo-endoribonuclease involved in late-stage 70S ribosome quality control and in maturation of the 3' terminus of the 16S rRNA. The polypeptide is Endoribonuclease YbeY (Listeria welshimeri serovar 6b (strain ATCC 35897 / DSM 20650 / CCUG 15529 / CIP 8149 / NCTC 11857 / SLCC 5334 / V8)).